Reading from the N-terminus, the 403-residue chain is MTESTFPQYPRLVLSKGREKSLLRRHPWVFSGAVSRLEGKANLGETIDIVDHQGKWLARGAWSPASQIRARVWTFDKAESIDIAFFTRRLRQAQQWRDWLAKKDGLDSYRLIAGESDGLPGVTIDRFGHFLVLQLLSAGAEYQRAALISALQTCYPDCAIYDRSDVAVRKKEGMALTQGPVTGELPPALLPIEEHGMKLLVDIQGGHKTGYYLDQRDSRLATRRYVENQRVLNCFSYTGGFAVSALMGGCRQVVSVDTSQDALDIARQNVELNQLDLSKAEFVRDDVFKLLRAYRERGEKFDVIIMDPPKFVENKSQLMGACRGYKDINMLAIQLLNPGGILLTFSCSGLMTSDLFQKIIADAAIDAGRDVQFIEQFRQAADHPVIATYPEGLYLKGFACRVM.

Positions 9 to 88 constitute a PUA domain; the sequence is YPRLVLSKGR…ESIDIAFFTR (80 aa).

It belongs to the methyltransferase superfamily. RlmI family.

The protein localises to the cytoplasm. It carries out the reaction cytidine(1962) in 23S rRNA + S-adenosyl-L-methionine = 5-methylcytidine(1962) in 23S rRNA + S-adenosyl-L-homocysteine + H(+). Its function is as follows. Specifically methylates the cytosine at position 1962 (m5C1962) of 23S rRNA. The sequence is that of Ribosomal RNA large subunit methyltransferase I from Salmonella newport (strain SL254).